Here is a 197-residue protein sequence, read N- to C-terminus: MSLKPLNMLLVPFLLLILAADFPLKAKASLLPFIDSPNTLLSDLWSDRFPDPFRVLEQIPYGVEKHEPSITLSHARVDWKETPEGHVIMVDVPGLKKDDIKIEVEENRVLRVSGERKKEEDKKGDHWHRVERSYGKFWRQFKLPQNVDLDSVKAKMENGVLTLTLHKLSHDKIKGPRMVSIVEEDDKPSKIVNDELK.

Residues 1–28 form the signal peptide; it reads MSLKPLNMLLVPFLLLILAADFPLKAKA. The region spanning 68 to 184 is the sHSP domain; it reads PSITLSHARV…GPRMVSIVEE (117 aa). The Prevents secretion from ER motif lies at 194-197; that stretch reads DELK.

Belongs to the small heat shock protein (HSP20) family. In terms of assembly, forms oligomeric structures.

The protein resides in the endoplasmic reticulum lumen. The chain is 22.7 kDa class IV heat shock protein (HSP22.7) from Pisum sativum (Garden pea).